A 604-amino-acid polypeptide reads, in one-letter code: Glutamine--fructose-6-phosphate aminotransferase [isomerizing] (604 aa).

Cys2 functions as the Nucleophile; for GATase activity in the catalytic mechanism. The Glutamine amidotransferase type-2 domain occupies Cys2 to Asp218. SIS domains are found at residues Ile284–Lys423 and Val456–Pro594. Lys599 acts as the For Fru-6P isomerization activity in catalysis.

Homodimer.

The protein resides in the cytoplasm. It catalyses the reaction D-fructose 6-phosphate + L-glutamine = D-glucosamine 6-phosphate + L-glutamate. Catalyzes the first step in hexosamine metabolism, converting fructose-6P into glucosamine-6P using glutamine as a nitrogen source. In Streptococcus agalactiae serotype V (strain ATCC BAA-611 / 2603 V/R), this protein is Glutamine--fructose-6-phosphate aminotransferase [isomerizing].